The chain runs to 124 residues: Large ribosomal subunit protein bL12 (124 aa).

Belongs to the bacterial ribosomal protein bL12 family. In terms of assembly, homodimer. Part of the ribosomal stalk of the 50S ribosomal subunit. Forms a multimeric L10(L12)X complex, where L10 forms an elongated spine to which 2 to 4 L12 dimers bind in a sequential fashion. Binds GTP-bound translation factors.

Its function is as follows. Forms part of the ribosomal stalk which helps the ribosome interact with GTP-bound translation factors. Is thus essential for accurate translation. The chain is Large ribosomal subunit protein bL12 from Paracoccus denitrificans (strain Pd 1222).